We begin with the raw amino-acid sequence, 220 residues long: DNA replication complex GINS protein SLD5 (220 aa).

The protein belongs to the GINS4/SLD5 family. In terms of assembly, component of the GINS complex. Interacts with EOL1 in the nucleus.

The protein localises to the nucleus. The GINS complex plays an essential role in the initiation of DNA replication. Required during embryogenesis. In Arabidopsis thaliana (Mouse-ear cress), this protein is DNA replication complex GINS protein SLD5.